Reading from the N-terminus, the 158-residue chain is U4/U6.U5 small nuclear ribonucleoprotein 27 kDa protein (158 aa).

The span at 1-30 shows a compositional bias: basic residues; that stretch reads MGRSRSRTPPRRERRRSRSSSRDRERRRRE. Residues 1 to 100 are disordered; that stretch reads MGRSRSRTPP…ISAEDMQGKT (100 aa). Basic and acidic residues predominate over residues 31–41; it reads RERSRSRDRDR. Residues 42–62 show a composition bias toward basic residues; the sequence is RRSRSRSPHRRRSRSPRRHRS. The segment covering 69 to 86 has biased composition (basic and acidic residues); it reads RQKDRRDDDRKDVKEKPA.

Belongs to the SNUT3 family. Part of a tri-snRNP complex.

Its subcellular location is the nucleus. Functionally, may play a role in mRNA splicing. The sequence is that of U4/U6.U5 small nuclear ribonucleoprotein 27 kDa protein (snrnp27) from Danio rerio (Zebrafish).